A 212-amino-acid chain; its full sequence is Probable transaldolase (212 aa).

The active-site Schiff-base intermediate with substrate is the Lys84.

Belongs to the transaldolase family. Type 3B subfamily.

The protein resides in the cytoplasm. It carries out the reaction D-sedoheptulose 7-phosphate + D-glyceraldehyde 3-phosphate = D-erythrose 4-phosphate + beta-D-fructose 6-phosphate. It functions in the pathway carbohydrate degradation; pentose phosphate pathway; D-glyceraldehyde 3-phosphate and beta-D-fructose 6-phosphate from D-ribose 5-phosphate and D-xylulose 5-phosphate (non-oxidative stage): step 2/3. Transaldolase is important for the balance of metabolites in the pentose-phosphate pathway. The polypeptide is Probable transaldolase (Bacillus velezensis (strain DSM 23117 / BGSC 10A6 / LMG 26770 / FZB42) (Bacillus amyloliquefaciens subsp. plantarum)).